The chain runs to 158 residues: Cyclic pyranopterin monophosphate synthase (158 aa).

Substrate-binding positions include 76–78 (LCH) and 114–115 (ME). D129 is a catalytic residue.

The protein belongs to the MoaC family. As to quaternary structure, homohexamer; trimer of dimers.

It catalyses the reaction (8S)-3',8-cyclo-7,8-dihydroguanosine 5'-triphosphate = cyclic pyranopterin phosphate + diphosphate. It participates in cofactor biosynthesis; molybdopterin biosynthesis. Catalyzes the conversion of (8S)-3',8-cyclo-7,8-dihydroguanosine 5'-triphosphate to cyclic pyranopterin monophosphate (cPMP). The polypeptide is Cyclic pyranopterin monophosphate synthase (Shewanella baltica (strain OS223)).